We begin with the raw amino-acid sequence, 177 residues long: Calerythrin (177 aa).

EF-hand domains follow at residues 5–40 (IASD…IAEA), 45–90 (AGAA…NLIF), 100–134 (VLGP…ALGM), and 134–169 (MSKA…FHFG). 4 residues coordinate Ca(2+): Asp-18, Asp-20, Asn-22, and Asp-29. Residues Asp-113, Asn-115, Asp-117, Gln-119, Glu-124, Asp-147, Asn-149, Asn-151, Glu-153, and Glu-158 each coordinate Ca(2+).

The polypeptide is Calerythrin (Saccharopolyspora erythraea (Streptomyces erythraeus)).